Here is a 544-residue protein sequence, read N- to C-terminus: Chaperonin GroEL 1 (544 aa).

Residues 30 to 33 (TLGP), 87 to 91 (DGTTT), Gly415, 480 to 482 (NAA), and Asp496 contribute to the ATP site.

Belongs to the chaperonin (HSP60) family. As to quaternary structure, forms a cylinder of 14 subunits composed of two heptameric rings stacked back-to-back. Interacts with the co-chaperonin GroES.

The protein localises to the cytoplasm. It catalyses the reaction ATP + H2O + a folded polypeptide = ADP + phosphate + an unfolded polypeptide.. Together with its co-chaperonin GroES, plays an essential role in assisting protein folding. The GroEL-GroES system forms a nano-cage that allows encapsulation of the non-native substrate proteins and provides a physical environment optimized to promote and accelerate protein folding. The protein is Chaperonin GroEL 1 of Polaromonas naphthalenivorans (strain CJ2).